The sequence spans 1939 residues: Myosin-1 (1939 aa).

One can recognise a Myosin N-terminal SH3-like domain in the interval 33–82 (DAKTSVFVAEPKESFVKGTVQSREGGKVTVKTEAGATLTVKEDQVFPMNP). Phosphothreonine occurs at positions 64 and 69. The Myosin motor domain maps to 86 to 782 (DKIEDMAMMT…LLGLLEEMRD (697 aa)). Residue lysine 130 is modified to N6,N6,N6-trimethyllysine. 179-186 (GESGAGKT) contacts ATP. Tyrosine 389 is subject to Phosphotyrosine. A Phosphothreonine modification is found at threonine 419. The residue at position 424 (tyrosine 424) is a Phosphotyrosine. Positions 659 to 681 (LNKLMTNLRSTHPHFVRCIIPNE) are actin-binding. Histidine 757 is modified (pros-methylhistidine). The segment at 761-775 (KFGHTKVFFKAGLLG) is actin-binding. An IQ domain is found at 785 to 814 (LAQLITRTQARCRGFLARVEYQKMVERRES). The stretch at 843 to 1939 (LLKSAETEKE…EVHTKIISEE (1097 aa)) forms a coiled coil. Residues serine 1092 and serine 1096 each carry the phosphoserine modification. 2 disordered regions span residues 1125–1147 (EIEA…SREL) and 1153–1172 (RLEE…KKRE). Residues 1128–1147 (AERASRAKAEKQRSDLSREL) show a composition bias toward basic and acidic residues. Residues serine 1162 and serine 1237 each carry the phosphoserine modification. At threonine 1241 the chain carries Phosphothreonine. Phosphoserine is present on serine 1243. At threonine 1255 the chain carries Phosphothreonine. Serine 1261 carries the phosphoserine modification. Threonine 1265 and threonine 1286 each carry phosphothreonine. A phosphoserine mark is found at serine 1288, serine 1292, serine 1303, and serine 1306. A Phosphotyrosine modification is found at tyrosine 1464. Position 1467 is a phosphothreonine (threonine 1467). Serine 1474 is modified (phosphoserine). The residue at position 1492 (tyrosine 1492) is a Phosphotyrosine. Phosphoserine is present on serine 1495. Threonine 1501 is modified (phosphothreonine). Serine 1514 is modified (phosphoserine). The residue at position 1517 (threonine 1517) is a Phosphothreonine. Phosphoserine is present on residues serine 1542, serine 1554, serine 1574, serine 1600, serine 1603, serine 1714, and serine 1726. Phosphothreonine occurs at positions 1730 and 1736. Phosphoserine is present on serine 1739.

It belongs to the TRAFAC class myosin-kinesin ATPase superfamily. Myosin family. Muscle myosin is a hexameric protein that consists of 2 heavy chain subunits (MHC), 2 alkali light chain subunits (MLC) and 2 regulatory light chain subunits (MLC-2). Interacts with SLC26A5.

The protein resides in the cytoplasm. Its subcellular location is the myofibril. Functionally, required for normal hearing. It plays a role in cochlear amplification of auditory stimuli, likely through the positive regulation of prestin (SLC26A5) activity and outer hair cell (OHC) electromotility. The polypeptide is Myosin-1 (MYH1) (Sus scrofa (Pig)).